A 226-amino-acid chain; its full sequence is Exosome complex component Rrp4 (226 aa).

An S1 motif domain is found at 61–135; the sequence is NDLVIGKVNS…RDPLVSISDR (75 aa). The region spanning 141–200 is the KH domain; the sequence is DSGVLMEISPSKVPRLIGKKGSMIQMIEEATDAAVTIGQNGWVVVSCESPEGLLKAKKAI.

Belongs to the RRP4 family. Component of the archaeal exosome complex. Forms a trimer of Rrp4 and/or Csl4 subunits. The trimer associates with a hexameric ring-like arrangement composed of 3 Rrp41-Rrp42 heterodimers.

The protein resides in the cytoplasm. In terms of biological role, non-catalytic component of the exosome, which is a complex involved in RNA degradation. Increases the RNA binding and the efficiency of RNA degradation. Confers strong poly(A) specificity to the exosome. This Nitrosopumilus maritimus (strain SCM1) protein is Exosome complex component Rrp4.